The chain runs to 578 residues: uncharacterized protein (578 aa).

This is an uncharacterized protein from Eikenella corrodens.